A 384-amino-acid chain; its full sequence is PqqA peptide cyclase (384 aa).

The Radical SAM core domain occupies 5-220; the sequence is VGLPLWLLAE…TNEYREKLKA (216 aa). [4Fe-4S] cluster-binding residues include C19, C23, and C26.

Belongs to the radical SAM superfamily. PqqE family. As to quaternary structure, interacts with PqqD. The interaction is necessary for activity of PqqE. [4Fe-4S] cluster is required as a cofactor.

The enzyme catalyses [PQQ precursor protein] + S-adenosyl-L-methionine = E-Y cross-linked-[PQQ precursor protein] + 5'-deoxyadenosine + L-methionine + H(+). It participates in cofactor biosynthesis; pyrroloquinoline quinone biosynthesis. Its function is as follows. Catalyzes the cross-linking of a glutamate residue and a tyrosine residue in the PqqA protein as part of the biosynthesis of pyrroloquinoline quinone (PQQ). The polypeptide is PqqA peptide cyclase (Acinetobacter baumannii (strain ACICU)).